The following is a 426-amino-acid chain: Serine--tRNA ligase (426 aa).

233–235 contributes to the L-serine binding site; it reads TAE. Position 264–266 (264–266) interacts with ATP; sequence RSE. E287 serves as a coordination point for L-serine. 351–354 contacts ATP; it reads EISS. S387 provides a ligand contact to L-serine.

Belongs to the class-II aminoacyl-tRNA synthetase family. Type-1 seryl-tRNA synthetase subfamily. In terms of assembly, homodimer. The tRNA molecule binds across the dimer.

It localises to the cytoplasm. The catalysed reaction is tRNA(Ser) + L-serine + ATP = L-seryl-tRNA(Ser) + AMP + diphosphate + H(+). It catalyses the reaction tRNA(Sec) + L-serine + ATP = L-seryl-tRNA(Sec) + AMP + diphosphate + H(+). It participates in aminoacyl-tRNA biosynthesis; selenocysteinyl-tRNA(Sec) biosynthesis; L-seryl-tRNA(Sec) from L-serine and tRNA(Sec): step 1/1. Functionally, catalyzes the attachment of serine to tRNA(Ser). Is also able to aminoacylate tRNA(Sec) with serine, to form the misacylated tRNA L-seryl-tRNA(Sec), which will be further converted into selenocysteinyl-tRNA(Sec). The chain is Serine--tRNA ligase from Clostridium tetani (strain Massachusetts / E88).